The following is a 326-amino-acid chain: G-protein coupled receptor 1 (326 aa).

Position 2 is an N-acetylserine (S2). The Extracellular portion of the chain corresponds to 2–23; sequence SAVLTAGGGLTAGDRSIITAIN. Residues 24 to 44 traverse the membrane as a helical segment; sequence TGASSLSFVGSAFIVLCYCLF. Topologically, residues 45-51 are cytoplasmic; it reads KELRKFS. A helical membrane pass occupies residues 52-72; it reads FKLVFYLALSDMLCSFFLIVG. At 73 to 84 the chain is on the extracellular side; the sequence is DPSKGFICYAQG. C80 and C151 are oxidised to a cystine. The chain crosses the membrane as a helical span at residues 85-105; the sequence is YTTHFFCVASFLWTTTIAFTL. Topologically, residues 106–120 are cytoplasmic; the sequence is HRTVVKHKTDVEDLE. The chain crosses the membrane as a helical span at residues 121 to 141; that stretch reads AMFHLYVWGTSLVVTVIRSFG. Residues 142-160 are Extracellular-facing; that stretch reads NNHSHLGPWCWTQTGLKGK. Residue N143 is glycosylated (N-linked (GlcNAc...) asparagine). A helical transmembrane segment spans residues 161 to 181; sequence AVHFLTFYAPLWGAILYNGFT. The Cytoplasmic segment spans residues 182–213; the sequence is YFQVIRMLRNARRMAVGMSDRVDQFDNRAELK. A helical transmembrane segment spans residues 214-234; that stretch reads VLNRWGYYPLILIGSWAFGTI. The Extracellular portion of the chain corresponds to 235 to 246; the sequence is NRIHDFIEPGHK. A helical membrane pass occupies residues 247–267; the sequence is IFWLSVLDVGTAALMGLFNSI. At 268-326 the chain is on the cytoplasmic side; it reads AYGFNSSVRRAIHERLELFLPERLYRWLPSNFRPKNHLILHQQQQQRSEMVSLKTEDQQ.

The protein belongs to the G-protein coupled receptor 2 family. As to quaternary structure, interacts with GPA1. As to expression, mostly present in the meristematic regions. Expressed at low levels in seedlings, vascular tissues of cotyledons, hypocotyl, and roots, stems, leaves, flowering buds and siliques. In dark-grown seedlings, localized in the cotyledons and the hook.

It is found in the cell membrane. Its function is as follows. Together with GPA1, may regulate the cell cycle via a signaling cascade that uses phosphatidylinositol-specific phospholipase C (PI-PLC) as an effector and inositol 1,4,5-trisphosphate(IP(3)) as a second messenger. Promotes PI-PLC activity and IP(3) accumulation. Involved in the blue light (BL) signaling. Together with GPA1 and ADT3, required for BL-mediated synthesis of phenylpyruvate and subsequently of phenylalanine (Phe), in etiolated seedlings. Probably involved in cytokinin signal transduction. Plays a positive role in gibberellin- (GA) and brassinosteroid- (BR) regulated seed germination, probably independently of a heterotrimeric G-protein. Mediates seed dormancy abolition, and promotes seed germination and flowering. The polypeptide is G-protein coupled receptor 1 (GCR1) (Arabidopsis thaliana (Mouse-ear cress)).